The following is a 215-amino-acid chain: LexA repressor (215 aa).

Positions 28–48 (RAEIAAELGFSSPNAAEEHLR) form a DNA-binding region, H-T-H motif. Residues serine 133 and lysine 170 each act as for autocatalytic cleavage activity in the active site.

This sequence belongs to the peptidase S24 family. Homodimer.

It catalyses the reaction Hydrolysis of Ala-|-Gly bond in repressor LexA.. Represses a number of genes involved in the response to DNA damage (SOS response), including recA and lexA. In the presence of single-stranded DNA, RecA interacts with LexA causing an autocatalytic cleavage which disrupts the DNA-binding part of LexA, leading to derepression of the SOS regulon and eventually DNA repair. This Burkholderia mallei (strain NCTC 10247) protein is LexA repressor.